The sequence spans 1603 residues: Vitellogenin-4 (1603 aa).

Positions 1 to 15 are cleaved as a signal peptide; the sequence is MKSIIIASLVALAIA. In terms of domain architecture, Vitellogenin spans 24 to 685; sequence FSPKSEYVYK…EKNAFLPKEV (662 aa). N-linked (GlcNAc...) asparagine glycosylation is present at Asn-1266. The VWFD domain occupies 1306-1475; it reads ATCKVDQSEV…SYLLKNEECE (170 aa). Disulfide bonds link Cys-1308–Cys-1438 and Cys-1330–Cys-1474.

In terms of tissue distribution, expressed in the intestine of adult hermaphrodites.

Its subcellular location is the secreted. In terms of biological role, precursor of the egg-yolk proteins that are sources of nutrients during embryonic development. Together with other vitellogenins, may play a role in modulating life-span, acting via induction of autophagy and lysosomal lipolysis. This Caenorhabditis elegans protein is Vitellogenin-4 (vit-4).